Consider the following 888-residue polypeptide: Glutamate receptor 3 (888 aa).

Residues 1 to 22 (MGQSVLRAVFFLVLGLLGHSHG) form the signal peptide. Residues 23–546 (GFPNTISIGG…GVFSFLDPLA (524 aa)) lie on the Extracellular side of the membrane. Asparagine 57, asparagine 260, asparagine 374, asparagine 409, and asparagine 416 each carry an N-linked (GlcNAc...) asparagine glycan. Residues cysteine 85 and cysteine 334 are joined by a disulfide bond. The L-glutamate site is built by proline 502, threonine 504, and arginine 509. The chain crosses the membrane as a helical span at residues 547 to 567 (YEIWMCIVFAYIGVSVVLFLV). Residues 568 to 596 (SRFSPYEWHLEDNNEEPRDPQSPPDPPNE) lie on the Cytoplasmic side of the membrane. Residues 597–612 (FGIFNSLWFSLGAFMQ) constitute an intramembrane region (helical; Pore-forming). The stretch at 613–615 (QGC) is an intramembrane region. A lipid anchor (S-palmitoyl cysteine) is attached at cysteine 615. Residues 616–621 (DISPRS) lie on the Cytoplasmic side of the membrane. Residues 622–642 (LSGRIVGGVWWFFTLIIISSY) form a helical membrane-spanning segment. Over 643-817 (TANLAAFLTV…DKTSALSLSN (175 aa)) the chain is Extracellular. Residues serine 680, threonine 681, and glutamate 731 each contribute to the L-glutamate site. An intrachain disulfide couples cysteine 744 to cysteine 799. The chain crosses the membrane as a helical span at residues 818–838 (VAGVFYILVGGLGLAMMVALI). At 839–888 (EFCYKSRAESKRMKLTKNTQNFKPAPATNTQNYATYREGYNVYGTESVKI) the chain is on the cytoplasmic side. Cysteine 841 is lipidated: S-palmitoyl cysteine. Tyrosine 871 and tyrosine 881 each carry phosphotyrosine.

This sequence belongs to the glutamate-gated ion channel (TC 1.A.10.1) family. GRIA3 subfamily. As to quaternary structure, homotetramer or heterotetramer of pore-forming glutamate receptor subunits. Tetramers may be formed by the dimerization of dimers. Interacts with PICK1, GRIP1 and GRIP2. Found in a complex with GRIA1, GRIA2, GRIA4, CNIH2, CNIH3, CACNG2, CACNG3, CACNG4, CACNG5, CACNG7 and CACNG8. Interacts with CACNG5. Found in a complex with GRIA1, GRIA2, GRIA4, DLG4, CACNG8 and CNIH2.

It is found in the cell membrane. The protein localises to the postsynaptic cell membrane. Its subcellular location is the postsynaptic density membrane. The enzyme catalyses Ca(2+)(in) = Ca(2+)(out). Ionotropic glutamate receptor that functions as a ligand-gated cation channel, gated by L-glutamate and glutamatergic agonists such as alpha-amino-3-hydroxy-5-methyl-4-isoxazolepropionic acid (AMPA), quisqualic acid, and kainic acid. L-glutamate acts as an excitatory neurotransmitter at many synapses in the central nervous system and plays an important role in fast excitatory synaptic transmission by inducing long-term potentiation. Binding of the excitatory neurotransmitter L-glutamate induces a conformation change, leading to the opening of the cation channel, and thereby converts the chemical signal to an electrical impulse upon entry of calcium. The receptor then desensitizes rapidly and enters a transient inactive state, characterized by the presence of bound agonist. In the presence of CACNG8, shows resensitization which is characterized by a delayed accumulation of current flux upon continued application of glutamate. The protein is Glutamate receptor 3 of Rattus norvegicus (Rat).